The chain runs to 508 residues: Glucose-1-phosphate adenylyltransferase small subunit 1, chloroplastic (508 aa).

The segment at 1–27 (MSSIVTSGVINVPRSSSSSKNLSFSSS) is disordered. The N-terminal 59 residues, 1–59 (MSSIVTSGVINVPRSSSSSKNLSFSSSSQLSGNKILTVSGNGAPRGRCTLKHVFLTPKA), are a transit peptide targeting the chloroplast. The span at 15 to 27 (SSSSSKNLSFSSS) shows a compositional bias: low complexity.

It belongs to the bacterial/plant glucose-1-phosphate adenylyltransferase family. Heterotetramer. As to expression, seeds.

It localises to the plastid. It is found in the chloroplast. It carries out the reaction alpha-D-glucose 1-phosphate + ATP + H(+) = ADP-alpha-D-glucose + diphosphate. Its pathway is glycan biosynthesis; starch biosynthesis. Its activity is regulated as follows. Activated by 3'phosphoglycerate, inhibited by orthophosphate. Allosteric regulation. Its function is as follows. This protein plays a role in synthesis of starch. It catalyzes the synthesis of the activated glycosyl donor, ADP-glucose from Glc-1-P and ATP. The chain is Glucose-1-phosphate adenylyltransferase small subunit 1, chloroplastic (AGPC) from Vicia faba (Broad bean).